Reading from the N-terminus, the 482-residue chain is Ribosomal RNA small subunit methyltransferase F (482 aa).

S-adenosyl-L-methionine contacts are provided by residues 119 to 125 (ASAPGSK), Glu-143, Asp-170, and Asp-188. Cys-241 serves as the catalytic Nucleophile.

The protein belongs to the class I-like SAM-binding methyltransferase superfamily. RsmB/NOP family.

Its subcellular location is the cytoplasm. The enzyme catalyses cytidine(1407) in 16S rRNA + S-adenosyl-L-methionine = 5-methylcytidine(1407) in 16S rRNA + S-adenosyl-L-homocysteine + H(+). In terms of biological role, specifically methylates the cytosine at position 1407 (m5C1407) of 16S rRNA. This chain is Ribosomal RNA small subunit methyltransferase F, found in Shewanella sp. (strain MR-7).